Reading from the N-terminus, the 401-residue chain is uncharacterized protein (401 aa).

This is an uncharacterized protein from Acanthamoeba polyphaga mimivirus (APMV).